The sequence spans 301 residues: Probable alpha-L-glutamate ligase 1 (301 aa).

The 184-residue stretch at 104–287 folds into the ATP-grasp domain; it reads MQLMSRRGIG…VAGAIIDFVE (184 aa). Residues lysine 141, 178–179, aspartate 187, and 211–213 each bind ATP; these read EY and RSN. Residues aspartate 248, glutamate 260, and asparagine 262 each coordinate Mg(2+). Mn(2+) is bound by residues aspartate 248, glutamate 260, and asparagine 262.

Belongs to the RimK family. Mg(2+) is required as a cofactor. The cofactor is Mn(2+).

In Shewanella baltica (strain OS185), this protein is Probable alpha-L-glutamate ligase 1.